Reading from the N-terminus, the 152-residue chain is Deoxyuridine 5'-triphosphate nucleotidohydrolase (152 aa).

Substrate is bound by residues 71 to 73, asparagine 84, 88 to 90, and methionine 98; these read RSG and LID.

Belongs to the dUTPase family. Mg(2+) is required as a cofactor.

It catalyses the reaction dUTP + H2O = dUMP + diphosphate + H(+). It participates in pyrimidine metabolism; dUMP biosynthesis; dUMP from dCTP (dUTP route): step 2/2. In terms of biological role, this enzyme is involved in nucleotide metabolism: it produces dUMP, the immediate precursor of thymidine nucleotides and it decreases the intracellular concentration of dUTP so that uracil cannot be incorporated into DNA. The polypeptide is Deoxyuridine 5'-triphosphate nucleotidohydrolase (Haemophilus ducreyi (strain 35000HP / ATCC 700724)).